Reading from the N-terminus, the 176-residue chain is NAD(P)H-quinone oxidoreductase subunit 6, chloroplastic (176 aa).

5 helical membrane passes run 10–30 (ILMLFGGFILLLGGLGVVLLT), 33–53 (IYSAFSLGLVLVCISLFYFLL), 60–80 (VAQLLIYVGAINVLIIFAVMF), 95–115 (IGDGFTSLVCITFVFSLMTTI), and 152–172 (FYLPFELISIILLVSLIGAIT).

The protein belongs to the complex I subunit 6 family. In terms of assembly, NDH is composed of at least 16 different subunits, 5 of which are encoded in the nucleus.

The protein localises to the plastid. The protein resides in the chloroplast thylakoid membrane. It catalyses the reaction a plastoquinone + NADH + (n+1) H(+)(in) = a plastoquinol + NAD(+) + n H(+)(out). It carries out the reaction a plastoquinone + NADPH + (n+1) H(+)(in) = a plastoquinol + NADP(+) + n H(+)(out). Functionally, NDH shuttles electrons from NAD(P)H:plastoquinone, via FMN and iron-sulfur (Fe-S) centers, to quinones in the photosynthetic chain and possibly in a chloroplast respiratory chain. The immediate electron acceptor for the enzyme in this species is believed to be plastoquinone. Couples the redox reaction to proton translocation, and thus conserves the redox energy in a proton gradient. This Hordeum vulgare (Barley) protein is NAD(P)H-quinone oxidoreductase subunit 6, chloroplastic (ndhG).